Consider the following 251-residue polypeptide: Protection of telomeres homolog 2 (251 aa).

Residues 221 to 251 (ELDNWPEGPPKTFAEAIARANNSRRPRDPPQ) form a disordered region.

This sequence belongs to the telombin family.

The protein localises to the nucleus. It is found in the chromosome. It localises to the telomere. Telomeric DNA-binding protein, which binds to two or more single-stranded G-rich repeat sequences (G-strand), with high specificity to the 5'-TTAGGC-3' sequence. In addition, repeat sequence binding requires a 3' single-stranded telomeric overhang. Acts redundantly with pot-1 to negatively regulate telomerase-mediated telomere extension. Also regulates telomere length by the telomerase-independent telomere maintenance pathway called ALT (alternative lengthening of telomeres). Does not appear to have a role in anchoring telomeres to the nuclear envelope. This chain is Protection of telomeres homolog 2, found in Caenorhabditis elegans.